Reading from the N-terminus, the 264-residue chain is Spermidine/putrescine transport system permease protein PotC (264 aa).

The next 6 membrane-spanning stretches (helical) occupy residues 10–30 (FMTA…VNSF), 66–86 (MAVF…VALY), 109–129 (IVMA…LGFW), 131–151 (LLFS…YSRL), 176–196 (IILP…FTLS), and 232–252 (ALAT…QLIA). The 189-residue stretch at 60–248 (AQHSLTMAVF…VLSLVMVIAS (189 aa)) folds into the ABC transmembrane type-1 domain.

It belongs to the binding-protein-dependent transport system permease family. CysTW subfamily.

Its subcellular location is the cell inner membrane. Its function is as follows. Required for the activity of the bacterial periplasmic transport system of putrescine and spermidine. This is Spermidine/putrescine transport system permease protein PotC (potC) from Shigella flexneri.